A 316-amino-acid polypeptide reads, in one-letter code: MTRIVFMGTPDFSVPVLGTLIDDGYEVVGVVTQPDRPKGRKKVMTPPPVKEEALRRGIPVLQPEKVREEAETDKILALEPDLIVTAAFGQILPKKLLDYPKYGCINVHASLLPELRGGAPIHYAILEGKEKTGVTIMYMVEKLDAGDMLAKVEVDIEETDNVGTLHDKLSKAGAALLSETVPRIIDGSVTPEKQDEQKATYAPNIKREQELIDWSKPGEVLYNQVRGLNPWPVAYTVLNGQTLKVWAAKKCQALKQAEPGEIVTVEKDGIVVATGNDTALKLTEVQPAGKKRMKAEDFVRGAGLQAGMKLGHDDEK.

Position 110–113 (S110–P113) interacts with (6S)-5,6,7,8-tetrahydrofolate.

It belongs to the Fmt family.

It catalyses the reaction L-methionyl-tRNA(fMet) + (6R)-10-formyltetrahydrofolate = N-formyl-L-methionyl-tRNA(fMet) + (6S)-5,6,7,8-tetrahydrofolate + H(+). Attaches a formyl group to the free amino group of methionyl-tRNA(fMet). The formyl group appears to play a dual role in the initiator identity of N-formylmethionyl-tRNA by promoting its recognition by IF2 and preventing the misappropriation of this tRNA by the elongation apparatus. The sequence is that of Methionyl-tRNA formyltransferase from Bacillus licheniformis (strain ATCC 14580 / DSM 13 / JCM 2505 / CCUG 7422 / NBRC 12200 / NCIMB 9375 / NCTC 10341 / NRRL NRS-1264 / Gibson 46).